We begin with the raw amino-acid sequence, 153 residues long: NAD(P)H-quinone oxidoreductase subunit N (153 aa).

The protein belongs to the complex I NdhN subunit family. As to quaternary structure, NDH-1 can be composed of about 15 different subunits; different subcomplexes with different compositions have been identified which probably have different functions.

Its subcellular location is the cellular thylakoid membrane. It catalyses the reaction a plastoquinone + NADH + (n+1) H(+)(in) = a plastoquinol + NAD(+) + n H(+)(out). The catalysed reaction is a plastoquinone + NADPH + (n+1) H(+)(in) = a plastoquinol + NADP(+) + n H(+)(out). Its function is as follows. NDH-1 shuttles electrons from an unknown electron donor, via FMN and iron-sulfur (Fe-S) centers, to quinones in the respiratory and/or the photosynthetic chain. The immediate electron acceptor for the enzyme in this species is believed to be plastoquinone. Couples the redox reaction to proton translocation, and thus conserves the redox energy in a proton gradient. Cyanobacterial NDH-1 also plays a role in inorganic carbon-concentration. In Parasynechococcus marenigrum (strain WH8102), this protein is NAD(P)H-quinone oxidoreductase subunit N.